A 365-amino-acid chain; its full sequence is Spermidine/putrescine import ATP-binding protein PotA (365 aa).

Residues isoleucine 9–isoleucine 239 form the ABC transporter domain. Glycine 41 to threonine 48 lines the ATP pocket.

It belongs to the ABC transporter superfamily. Spermidine/putrescine importer (TC 3.A.1.11.1) family. As to quaternary structure, the complex is composed of two ATP-binding proteins (PotA), two transmembrane proteins (PotB and PotC) and a solute-binding protein (PotD).

The protein localises to the cell membrane. The catalysed reaction is ATP + H2O + polyamine-[polyamine-binding protein]Side 1 = ADP + phosphate + polyamineSide 2 + [polyamine-binding protein]Side 1.. Part of the ABC transporter complex PotABCD involved in spermidine/putrescine import. Responsible for energy coupling to the transport system. The polypeptide is Spermidine/putrescine import ATP-binding protein PotA (Lactiplantibacillus plantarum (strain ATCC BAA-793 / NCIMB 8826 / WCFS1) (Lactobacillus plantarum)).